Reading from the N-terminus, the 111-residue chain is WAP four-disulfide core domain protein 12 (111 aa).

The N-terminal stretch at 1–23 (MRSSRFLVLMVSLALVTLVASEG) is a signal peptide. The WAP domain maps to 27–74 (NTEKPGVCPADNVRCIKSDPPQCHTDQDCQGIRKCCYLHCGFKCVIPV). Intrachain disulfides connect C34–C62, C41–C66, C49–C61, and C55–C70.

It is found in the secreted. In terms of biological role, antibacterial protein. Putative acid-stable proteinase inhibitor. The chain is WAP four-disulfide core domain protein 12 (WFDC12) from Saimiri boliviensis boliviensis (Bolivian squirrel monkey).